Here is a 357-residue protein sequence, read N- to C-terminus: Arginine kinase Scy p 2.0101 (357 aa).

In terms of domain architecture, Phosphagen kinase N-terminal spans Lys9–Lys91. Gly64–Tyr68 contributes to the L-arginine binding site. IgE-binding and beta-hexosaminidase release from rat basophilic leukemia (RBL) cells regions lie at residues Val113 to Cys127 and Cys127 to Thr155. Positions Phe119–Met356 constitute a Phosphagen kinase C-terminal domain. Ser122–Arg126 lines the ATP pocket. His185 is an ATP binding site. A disulfide bridge connects residues Cys201 and Cys271. The interval Trp204–Phe218 is igE-binding and beta-hexosaminidase release from rat basophilic leukemia (RBL) cells. The tract at residues Tyr211–Glu225 is igE-binding, but no beta-hexosaminidase release from rat basophilic leukemia (RBL) cells. Glu225 lines the L-arginine pocket. Arg229 contributes to the ATP binding site. Residue Cys271 coordinates L-arginine. ATP-binding positions include Arg280–His284 and Arg309–Glu314. Glu314 lines the L-arginine pocket. An igE-binding, but no beta-hexosaminidase release from rat basophilic leukemia (RBL) cells region spans residues Thr316–Arg330.

This sequence belongs to the ATP:guanido phosphotransferase family. Post-translationally, glycosylated. Muscle (at protein level).

The enzyme catalyses L-arginine + ATP = N(omega)-phospho-L-arginine + ADP + H(+). Functionally, catalyzes the reversible transfer of high energy ATP gamma-phosphate group to L-arginine. The polypeptide is Arginine kinase Scy p 2.0101 (Scylla paramamosain (Mud crab)).